A 476-amino-acid polypeptide reads, in one-letter code: MAPAGLSLGAAILCLLAWAGLAAGDRVYVHPFHLLVYSKSNCDQLEKPSVETPPDPTFTPVPIQTKSSAVDEEALWEQLVRATEKLEAEDRLRASEVGLLLNFMGFHMYKTLSETWSVASGAVFSPVALFSTLTSFYVGALDPTASRLQAFLGVPGEGQGCTSRLDGHKVLSSLQTIQGLLVAQGGASSQARLLLSTVVGLFTAPGLHLKQPFVQSLSSFAPITLPRSLDLSTDPNLAAEKINRFMQSVTGWNMGRALTAVSPDSTLLFNAYVHFQGKMKGFSLLPGLKEFWVDNTTSVSVPMLSGTGIFHFWSDSQNNLSVTRVPLSANTYLLLIQPHHTPDLRKVEALTFQHNFLTRMKNLSPRAIHLTMPQLTLKASYDLQDLLAQAKLPTLLGAEANLSKISDANLRVGKVLNSVLFELKADGEQAPESVPQPAGPEALEVTLNSPFLLAVLERSSGALHFLGRVSRPLSAE.

A signal peptide spans Met-1–Gly-24. A disulfide bridge links Cys-42 with Cys-161. N-linked (GlcNAc...) asparagine glycosylation is found at Asn-295, Asn-319, Asn-362, and Asn-401.

Belongs to the serpin family. In response to low blood pressure, the enzyme renin/REN cleaves angiotensinogen to produce angiotensin-1. Angiotensin-1 is a substrate of ACE (angiotensin converting enzyme) that removes a dipeptide to yield the physiologically active peptide angiotensin-2. Angiotensin-1 and angiotensin-2 can be further processed to generate angiotensin-3, angiotensin-4. Angiotensin 1-9 is cleaved from angiotensin-1 by ACE2 and can be further processed by ACE to produce angiotensin 1-7, angiotensin 1-5 and angiotensin 1-4. Angiotensin 1-7 has also been proposed to be cleaved from angiotensin-2 by ACE2 or from angiotensin-1 by MME (neprilysin). Post-translationally, the disulfide bond is labile. Angiotensinogen is present in the circulation in a near 40:60 ratio with the oxidized disulfide-bonded form, which preferentially interacts with receptor-bound renin.

It is found in the secreted. Essential component of the renin-angiotensin system (RAS), a potent regulator of blood pressure, body fluid and electrolyte homeostasis. Functionally, acts directly on vascular smooth muscle as a potent vasoconstrictor, affects cardiac contractility and heart rate through its action on the sympathetic nervous system, and alters renal sodium and water absorption through its ability to stimulate the zona glomerulosa cells of the adrenal cortex to synthesize and secrete aldosterone. Acts by binding to angiotensin receptors AGTR1 and AGTR2. Also binds the DEAR/FBXW7-AS1 receptor. In terms of biological role, stimulates aldosterone release. Its function is as follows. Is a ligand for the G-protein coupled receptor MAS1. Has vasodilator and antidiuretic effects. Has an antithrombotic effect that involves MAS1-mediated release of nitric oxide from platelets. This Bos taurus (Bovine) protein is Angiotensinogen (AGT).